The chain runs to 235 residues: Protein GMH1 homolog (235 aa).

The Cytoplasmic portion of the chain corresponds to 1–54 (MSRSFRNGFRLLKLSQMDFERAWWDMANLFRAPRRVYRSITLRKQNINRYGRED). The chain crosses the membrane as a helical span at residues 55–75 (FSFIVLFSCMIVISALLWALF). The Lumenal portion of the chain corresponds to 76–88 (YMNTPKGYVTTIT). A helical membrane pass occupies residues 89–109 (FMLFVDFGAVGVIMATMYYFI). Residues 110 to 140 (AKRFLMKSNDTILSSTDYQLEWNYCFDVHCN) lie on the Cytoplasmic side of the membrane. A helical membrane pass occupies residues 141–161 (SFFPSFVLLYVIQLFLLPVIT). The Lumenal segment spans residues 162–175 (RDNFISLFMGNTLY). A helical membrane pass occupies residues 176–196 (LVALCYYSYLTFIGYQILPFL). At 197–201 (KNTHA) the chain is on the cytoplasmic side. Residues 202-222 (LLLPIPMFFIMWALSLLGFNV) traverse the membrane as a helical segment. The Lumenal segment spans residues 223–235 (PKHVVDVYFGKSA).

It belongs to the unc-50 family.

The protein resides in the endoplasmic reticulum membrane. In terms of biological role, has a role in meiosis. This is Protein GMH1 homolog (mug16) from Schizosaccharomyces pombe (strain 972 / ATCC 24843) (Fission yeast).